Here is a 314-residue protein sequence, read N- to C-terminus: MKRAPTKQPAKPAARGGERAQGRVIAAHGRHYIVAPADGGPMLQCFPRRKKSEVAVGDRVAYERTSADQGVIVEIGERRNLLYRSDQFKSKLFAANLDQLLIVLATEPYFSEDLLGRALIAAEANELKPIVVLNKIDVEAALPVARERLAPYRALGYDVLELSVKSAPDDARTQLAPRLAGHSTILLGQSGMGKSTLVNLLVPNAEAATREISAALNSGRHTTTFTRLYPLQDGGALIDSPGFQEFGLYHLTEGRLERAFPEFRPLLAHCRFYNCHHLHEPGCAILEALADGRIAPTRHALYAQLVHEASQIVR.

A disordered region spans residues 1 to 21 (MKRAPTKQPAKPAARGGERAQ). The CP-type G domain maps to 85–246 (SDQFKSKLFA…LIDSPGFQEF (162 aa)). GTP contacts are provided by residues 134-137 (NKID) and 188-196 (GQSGMGKST). 4 residues coordinate Zn(2+): Cys270, Cys275, His277, and Cys283.

This sequence belongs to the TRAFAC class YlqF/YawG GTPase family. RsgA subfamily. As to quaternary structure, monomer. Associates with 30S ribosomal subunit, binds 16S rRNA. It depends on Zn(2+) as a cofactor.

It is found in the cytoplasm. One of several proteins that assist in the late maturation steps of the functional core of the 30S ribosomal subunit. Helps release RbfA from mature subunits. May play a role in the assembly of ribosomal proteins into the subunit. Circularly permuted GTPase that catalyzes slow GTP hydrolysis, GTPase activity is stimulated by the 30S ribosomal subunit. This chain is Small ribosomal subunit biogenesis GTPase RsgA, found in Burkholderia mallei (strain ATCC 23344).